We begin with the raw amino-acid sequence, 334 residues long: Protein-methionine-sulfoxide reductase catalytic subunit MsrP (334 aa).

Residues 1–44 (MKKNQFLKESDVTAESVFFMKRRQVLKALGISAAALSLPHAAHA) constitute a signal peptide (tat-type signal). Mo-molybdopterin is bound by residues asparagine 88, 91–92 (YE), cysteine 146, threonine 181, asparagine 233, arginine 238, and 249–251 (GIK).

It belongs to the MsrP family. As to quaternary structure, heterodimer of a catalytic subunit (MsrP) and a heme-binding subunit (MsrQ). It depends on Mo-molybdopterin as a cofactor. In terms of processing, predicted to be exported by the Tat system. The position of the signal peptide cleavage has not been experimentally proven.

It is found in the periplasm. It carries out the reaction L-methionyl-[protein] + a quinone + H2O = L-methionyl-(S)-S-oxide-[protein] + a quinol. The catalysed reaction is L-methionyl-[protein] + a quinone + H2O = L-methionyl-(R)-S-oxide-[protein] + a quinol. Part of the MsrPQ system that repairs oxidized periplasmic proteins containing methionine sulfoxide residues (Met-O), using respiratory chain electrons. Thus protects these proteins from oxidative-stress damage caused by reactive species of oxygen and chlorine generated by the host defense mechanisms. MsrPQ is essential for the maintenance of envelope integrity under bleach stress, rescuing a wide series of structurally unrelated periplasmic proteins from methionine oxidation, including the primary periplasmic chaperone SurA and the lipoprotein Pal. The catalytic subunit MsrP is non-stereospecific, being able to reduce both (R-) and (S-) diastereoisomers of methionine sulfoxide. The sequence is that of Protein-methionine-sulfoxide reductase catalytic subunit MsrP from Escherichia coli O17:K52:H18 (strain UMN026 / ExPEC).